The chain runs to 316 residues: Ribosomal RNA small subunit methyltransferase H (316 aa).

S-adenosyl-L-methionine is bound by residues 35-37, Asp55, Phe84, Asp105, and Gln112; that span reads AGH.

It belongs to the methyltransferase superfamily. RsmH family.

The protein resides in the cytoplasm. The enzyme catalyses cytidine(1402) in 16S rRNA + S-adenosyl-L-methionine = N(4)-methylcytidine(1402) in 16S rRNA + S-adenosyl-L-homocysteine + H(+). In terms of biological role, specifically methylates the N4 position of cytidine in position 1402 (C1402) of 16S rRNA. This is Ribosomal RNA small subunit methyltransferase H from Streptococcus pneumoniae (strain Hungary19A-6).